The primary structure comprises 223 residues: Deoxyribose-phosphate aldolase 1 (223 aa).

Asp-91 acts as the Proton donor/acceptor in catalysis. Lys-153 functions as the Schiff-base intermediate with acetaldehyde in the catalytic mechanism. Residue Lys-182 is the Proton donor/acceptor of the active site.

The protein belongs to the DeoC/FbaB aldolase family. DeoC type 1 subfamily.

The protein localises to the cytoplasm. It carries out the reaction 2-deoxy-D-ribose 5-phosphate = D-glyceraldehyde 3-phosphate + acetaldehyde. It participates in carbohydrate degradation; 2-deoxy-D-ribose 1-phosphate degradation; D-glyceraldehyde 3-phosphate and acetaldehyde from 2-deoxy-alpha-D-ribose 1-phosphate: step 2/2. In terms of biological role, catalyzes a reversible aldol reaction between acetaldehyde and D-glyceraldehyde 3-phosphate to generate 2-deoxy-D-ribose 5-phosphate. The chain is Deoxyribose-phosphate aldolase 1 from Yersinia pestis.